The chain runs to 266 residues: E3 ubiquitin-protein ligase RNF170 (266 aa).

The Lumenal segment spans residues 1–26; that stretch reads MEGSVCVDGAAAPAPDEASLIEGVSN. Residues 27–47 traverse the membrane as a helical segment; it reads AVLLVLVLSVTLLAGLTTLLC. Topologically, residues 48–209 are cytoplasmic; it reads RSEQQRIHPE…GGLFWMFRVR (162 aa). Residues 88–131 form an RING-type zinc finger; sequence CPVCLQQAVLPVETNCGHLFCGSCIIAYWRYGTWLGAISCPICR. A helical transmembrane segment spans residues 210–230; sequence ILLCVCGALAYLVSPLDFLPE. Gly231 is a topological domain (lumenal). Residues 232-252 form a helical membrane-spanning segment; sequence VLGLLGFLDDFFVILLLFIYI. At 253 to 266 the chain is on the cytoplasmic side; sequence SIMYREVVTQRLAG.

As to expression, highly expressed in the developing brain, and less within intersomitic structures of the trunk.

It is found in the endoplasmic reticulum membrane. It carries out the reaction S-ubiquitinyl-[E2 ubiquitin-conjugating enzyme]-L-cysteine + [acceptor protein]-L-lysine = [E2 ubiquitin-conjugating enzyme]-L-cysteine + N(6)-ubiquitinyl-[acceptor protein]-L-lysine.. The protein operates within protein modification; protein ubiquitination. In terms of biological role, E3 ubiquitin-protein ligase that plays an essential role in stimulus-induced inositol 1,4,5-trisphosphate receptor (ITPR) ubiquitination and degradation via the endoplasmic reticulum-associated degradation (ERAD) pathway. Also involved in ITPR turnover in resting cells. The chain is E3 ubiquitin-protein ligase RNF170 (rnf170) from Danio rerio (Zebrafish).